The sequence spans 513 residues: ETS translocation variant 3 (513 aa).

Residues 35 to 116 constitute a DNA-binding region (ETS); that stretch reads IQLWHFILEL…KGKRFTYKFN (82 aa). Residues 138–202 form a disordered region; it reads QSAPPVPTAS…DLEDGSASDW (65 aa). 3 positions are modified to phosphoserine: S139, S159, and S315. The tract at residues 333-513 is disordered; the sequence is QMHPEEPSQF…ATTATAAADA (181 aa). Composition is skewed to basic and acidic residues over residues 357–366, 380–392, and 399–419; these read ERVESREEAV, IKVE…DPDS, and GKEE…EEGK. Residue K381 forms a Glycyl lysine isopeptide (Lys-Gly) (interchain with G-Cter in SUMO2) linkage. At K388 the chain carries N6-acetyllysine; alternate. K388 participates in a covalent cross-link: Glycyl lysine isopeptide (Lys-Gly) (interchain with G-Cter in SUMO2); alternate. Residues 430–439 show a composition bias toward polar residues; it reads WPSVSISTPS. A compositionally biased stretch (acidic residues) spans 441-450; sequence EPLEGTEDSE. 2 stretches are compositionally biased toward basic and acidic residues: residues 451–466 and 477–489; these read DRSV…KEDA and RWND…ELNK. Positions 504–513 are enriched in low complexity; that stretch reads ATTATAAADA.

This sequence belongs to the ETS family.

The protein localises to the nucleus. Transcriptional repressor that contribute to growth arrest during terminal macrophage differentiation by repressing target genes involved in Ras-dependent proliferation. Represses MMP1 promoter activity. In Mus musculus (Mouse), this protein is ETS translocation variant 3 (Etv3).